The sequence spans 430 residues: Serine carboxypeptidase-like 13 (430 aa).

The signal sequence occupies residues 1–22; sequence MSLTLEFLLLLIVLILSHHAHS. Cystine bridges form between Cys-81-Cys-319, Cys-240-Cys-254, and Cys-278-Cys-285. A glycan (N-linked (GlcNAc...) asparagine) is linked at Asn-102. Ser-177 is a catalytic residue. N-linked (GlcNAc...) asparagine glycans are attached at residues Asn-299 and Asn-323. Residue Asp-355 is part of the active site. N-linked (GlcNAc...) asparagine glycosylation is present at Asn-371. His-408 is a catalytic residue.

Belongs to the peptidase S10 family. Expression not detected.

It is found in the secreted. The enzyme catalyses 2 1-O-(trans-sinapoyl)-beta-D-glucose = 1,2-di-O-sinapoyl beta-D-glucose + D-glucose. Functionally, catalyzes the formation of 1,2-bis-O-sinapoyl beta-D-glucoside. The chain is Serine carboxypeptidase-like 13 (SCPL13) from Arabidopsis thaliana (Mouse-ear cress).